Reading from the N-terminus, the 200-residue chain is Holliday junction branch migration complex subunit RuvA (200 aa).

Residues 1–64 (MFAYFKGSLV…EDALQLYGFF (64 aa)) form a domain I region. The interval 65–143 (KEEERQLFRL…KLPLVTPAAG (79 aa)) is domain II. The flexible linker stretch occupies residues 143–147 (GKAAM). The segment at 148–200 (PSHHVKDDAVHALVTLGFSRLLAQKAVSALLEEKPEQSVEEVIKYALATIHNS) is domain III.

Belongs to the RuvA family. In terms of assembly, homotetramer. Forms an RuvA(8)-RuvB(12)-Holliday junction (HJ) complex. HJ DNA is sandwiched between 2 RuvA tetramers; dsDNA enters through RuvA and exits via RuvB. An RuvB hexamer assembles on each DNA strand where it exits the tetramer. Each RuvB hexamer is contacted by two RuvA subunits (via domain III) on 2 adjacent RuvB subunits; this complex drives branch migration. In the full resolvosome a probable DNA-RuvA(4)-RuvB(12)-RuvC(2) complex forms which resolves the HJ.

Its subcellular location is the cytoplasm. The RuvA-RuvB-RuvC complex processes Holliday junction (HJ) DNA during genetic recombination and DNA repair, while the RuvA-RuvB complex plays an important role in the rescue of blocked DNA replication forks via replication fork reversal (RFR). RuvA specifically binds to HJ cruciform DNA, conferring on it an open structure. The RuvB hexamer acts as an ATP-dependent pump, pulling dsDNA into and through the RuvAB complex. HJ branch migration allows RuvC to scan DNA until it finds its consensus sequence, where it cleaves and resolves the cruciform DNA. The chain is Holliday junction branch migration complex subunit RuvA from Chlorobium phaeobacteroides (strain DSM 266 / SMG 266 / 2430).